The chain runs to 91 residues: Small ribosomal subunit protein uS15c (91 aa).

Belongs to the universal ribosomal protein uS15 family. Part of the 30S ribosomal subunit.

It localises to the plastid. Its subcellular location is the chloroplast. This chain is Small ribosomal subunit protein uS15c (rps15), found in Cicer arietinum (Chickpea).